The chain runs to 872 residues: Alanine--tRNA ligase (872 aa).

H567, H571, C669, and H673 together coordinate Zn(2+).

This sequence belongs to the class-II aminoacyl-tRNA synthetase family. The cofactor is Zn(2+).

It is found in the cytoplasm. It carries out the reaction tRNA(Ala) + L-alanine + ATP = L-alanyl-tRNA(Ala) + AMP + diphosphate. In terms of biological role, catalyzes the attachment of alanine to tRNA(Ala) in a two-step reaction: alanine is first activated by ATP to form Ala-AMP and then transferred to the acceptor end of tRNA(Ala). Also edits incorrectly charged Ser-tRNA(Ala) and Gly-tRNA(Ala) via its editing domain. The sequence is that of Alanine--tRNA ligase from Streptococcus pneumoniae serotype 4 (strain ATCC BAA-334 / TIGR4).